The following is a 275-amino-acid chain: 4-hydroxy-3-methylbut-2-enyl diphosphate reductase (275 aa).

C12 provides a ligand contact to [4Fe-4S] cluster. (2E)-4-hydroxy-3-methylbut-2-enyl diphosphate-binding residues include H40 and H70. The dimethylallyl diphosphate site is built by H40 and H70. H40 and H70 together coordinate isopentenyl diphosphate. C92 provides a ligand contact to [4Fe-4S] cluster. H119 contacts (2E)-4-hydroxy-3-methylbut-2-enyl diphosphate. Position 119 (H119) interacts with dimethylallyl diphosphate. H119 contacts isopentenyl diphosphate. The active-site Proton donor is the E121. T151 contacts (2E)-4-hydroxy-3-methylbut-2-enyl diphosphate. C181 contacts [4Fe-4S] cluster. Positions 209, 210, 211, and 251 each coordinate (2E)-4-hydroxy-3-methylbut-2-enyl diphosphate. Dimethylallyl diphosphate-binding residues include S209, S210, N211, and S251. Residues S209, S210, N211, and S251 each coordinate isopentenyl diphosphate.

The protein belongs to the IspH family. The cofactor is [4Fe-4S] cluster.

It carries out the reaction isopentenyl diphosphate + 2 oxidized [2Fe-2S]-[ferredoxin] + H2O = (2E)-4-hydroxy-3-methylbut-2-enyl diphosphate + 2 reduced [2Fe-2S]-[ferredoxin] + 2 H(+). It catalyses the reaction dimethylallyl diphosphate + 2 oxidized [2Fe-2S]-[ferredoxin] + H2O = (2E)-4-hydroxy-3-methylbut-2-enyl diphosphate + 2 reduced [2Fe-2S]-[ferredoxin] + 2 H(+). It participates in isoprenoid biosynthesis; dimethylallyl diphosphate biosynthesis; dimethylallyl diphosphate from (2E)-4-hydroxy-3-methylbutenyl diphosphate: step 1/1. The protein operates within isoprenoid biosynthesis; isopentenyl diphosphate biosynthesis via DXP pathway; isopentenyl diphosphate from 1-deoxy-D-xylulose 5-phosphate: step 6/6. Catalyzes the conversion of 1-hydroxy-2-methyl-2-(E)-butenyl 4-diphosphate (HMBPP) into a mixture of isopentenyl diphosphate (IPP) and dimethylallyl diphosphate (DMAPP). Acts in the terminal step of the DOXP/MEP pathway for isoprenoid precursor biosynthesis. This Thermotoga maritima (strain ATCC 43589 / DSM 3109 / JCM 10099 / NBRC 100826 / MSB8) protein is 4-hydroxy-3-methylbut-2-enyl diphosphate reductase.